A 75-amino-acid chain; its full sequence is Large ribosomal subunit protein bL31 (75 aa).

Belongs to the bacterial ribosomal protein bL31 family. Type A subfamily. As to quaternary structure, part of the 50S ribosomal subunit.

Binds the 23S rRNA. This Rhodopseudomonas palustris (strain BisB5) protein is Large ribosomal subunit protein bL31.